A 288-amino-acid chain; its full sequence is Bifunctional protein FolD (288 aa).

NADP(+) is bound by residues 166–168, serine 191, and isoleucine 232; that span reads GRS.

Belongs to the tetrahydrofolate dehydrogenase/cyclohydrolase family. As to quaternary structure, homodimer.

It carries out the reaction (6R)-5,10-methylene-5,6,7,8-tetrahydrofolate + NADP(+) = (6R)-5,10-methenyltetrahydrofolate + NADPH. The enzyme catalyses (6R)-5,10-methenyltetrahydrofolate + H2O = (6R)-10-formyltetrahydrofolate + H(+). Its pathway is one-carbon metabolism; tetrahydrofolate interconversion. Functionally, catalyzes the oxidation of 5,10-methylenetetrahydrofolate to 5,10-methenyltetrahydrofolate and then the hydrolysis of 5,10-methenyltetrahydrofolate to 10-formyltetrahydrofolate. The chain is Bifunctional protein FolD from Rickettsia canadensis (strain McKiel).